We begin with the raw amino-acid sequence, 175 residues long: Methylated-DNA--protein-cysteine methyltransferase (175 aa).

DNA-binding residues include tyrosine 115 and arginine 127. Cysteine 144 functions as the Nucleophile; methyl group acceptor in the catalytic mechanism.

It belongs to the MGMT family.

The protein localises to the nucleus. The enzyme catalyses a 6-O-methyl-2'-deoxyguanosine in DNA + L-cysteinyl-[protein] = S-methyl-L-cysteinyl-[protein] + a 2'-deoxyguanosine in DNA. The catalysed reaction is a 4-O-methyl-thymidine in DNA + L-cysteinyl-[protein] = a thymidine in DNA + S-methyl-L-cysteinyl-[protein]. Its function is as follows. Involved in the cellular defense against the biological effects of O6-methylguanine (O6-MeG) and O4-methylthymine (O4-MeT) in DNA. Repairs the methylated nucleobase in DNA by stoichiometrically transferring the methyl group to a cysteine residue in the enzyme. This is a suicide reaction: the enzyme is irreversibly inactivated. This chain is Methylated-DNA--protein-cysteine methyltransferase (MGT1), found in Candida albicans (strain SC5314 / ATCC MYA-2876) (Yeast).